The chain runs to 158 residues: S-ribosylhomocysteine lyase (158 aa).

Residues His-55, His-59, and Cys-127 each contribute to the Fe cation site.

It belongs to the LuxS family. Homodimer. The cofactor is Fe cation.

It catalyses the reaction S-(5-deoxy-D-ribos-5-yl)-L-homocysteine = (S)-4,5-dihydroxypentane-2,3-dione + L-homocysteine. Functionally, involved in the synthesis of autoinducer 2 (AI-2) which is secreted by bacteria and is used to communicate both the cell density and the metabolic potential of the environment. The regulation of gene expression in response to changes in cell density is called quorum sensing. Catalyzes the transformation of S-ribosylhomocysteine (RHC) to homocysteine (HC) and 4,5-dihydroxy-2,3-pentadione (DPD). The sequence is that of S-ribosylhomocysteine lyase from Geobacillus thermodenitrificans (strain NG80-2).